Here is a 352-residue protein sequence, read N- to C-terminus: N-acetyl-gamma-glutamyl-phosphate reductase 1 (352 aa).

This sequence belongs to the NAGSA dehydrogenase family. Type 1 subfamily.

It is found in the cytoplasm. The enzyme catalyses N-acetyl-L-glutamate 5-semialdehyde + phosphate + NADP(+) = N-acetyl-L-glutamyl 5-phosphate + NADPH + H(+). Its pathway is amino-acid biosynthesis; L-arginine biosynthesis; N(2)-acetyl-L-ornithine from L-glutamate: step 3/4. Catalyzes the NADPH-dependent reduction of N-acetyl-5-glutamyl phosphate to yield N-acetyl-L-glutamate 5-semialdehyde. This Nostoc sp. (strain PCC 7120 / SAG 25.82 / UTEX 2576) protein is N-acetyl-gamma-glutamyl-phosphate reductase 1.